A 222-amino-acid polypeptide reads, in one-letter code: Protein-L-isoaspartate O-methyltransferase (222 aa).

The active site involves serine 69.

This sequence belongs to the methyltransferase superfamily. L-isoaspartyl/D-aspartyl protein methyltransferase family.

It is found in the cytoplasm. It catalyses the reaction [protein]-L-isoaspartate + S-adenosyl-L-methionine = [protein]-L-isoaspartate alpha-methyl ester + S-adenosyl-L-homocysteine. Functionally, catalyzes the methyl esterification of L-isoaspartyl residues in peptides and proteins that result from spontaneous decomposition of normal L-aspartyl and L-asparaginyl residues. It plays a role in the repair and/or degradation of damaged proteins. The polypeptide is Protein-L-isoaspartate O-methyltransferase (Nitrosomonas eutropha (strain DSM 101675 / C91 / Nm57)).